The chain runs to 1368 residues: DNA-directed RNA polymerase subunit beta (1368 aa).

Belongs to the RNA polymerase beta chain family. The RNAP catalytic core consists of 2 alpha, 1 beta, 1 beta' and 1 omega subunit. When a sigma factor is associated with the core the holoenzyme is formed, which can initiate transcription.

The enzyme catalyses RNA(n) + a ribonucleoside 5'-triphosphate = RNA(n+1) + diphosphate. Functionally, DNA-dependent RNA polymerase catalyzes the transcription of DNA into RNA using the four ribonucleoside triphosphates as substrates. The sequence is that of DNA-directed RNA polymerase subunit beta from Cupriavidus taiwanensis (strain DSM 17343 / BCRC 17206 / CCUG 44338 / CIP 107171 / LMG 19424 / R1) (Ralstonia taiwanensis (strain LMG 19424)).